The following is a 482-amino-acid chain: MGLLAYLLVILLILNVFFAAVTVFLERRDTSATWAWLLVLTFVPIFGFIIYLIFGRKLSGKKIFDWKGQEKIGIQESTANQIEMIRQKEFPFSDPNVKKHRDLIYLLLVNDGAILTQDNEVELFIDGHEKFDALIADIEKAKDHIHLIYYIFHSDELGNRLMRVLERKAAEGLNVKIIYDAMGSRTTKKSFFRTFEKNGGLVRPFFPSKLPLINFRLNYRNHRKLAIIDGDVGYIGGFNIGDEYLGRSKKFGYWRDTHLRVHGKAVYAMQTRFIMDWNSASSTHKIDYKARYFPTFHGKGHTSMQIVSSGPDSEWQQIKNGYIKMINAAKKTIYLQSPYFIPDASLLEAIKIAALSGVDVRVMIPNKPDHAFVYRATTNYAGELMETGAKIFIYDNGFIHAKTLVVDGEIASVGTANMDFRSFRLNFEVNAFIYEKKMVQKLEDAFLEDILKSYQLTPELYAKRSLWIKFKEAVSRLLSPIL.

The next 2 membrane-spanning stretches (helical) occupy residues 4–24 (LAYLLVILLILNVFFAAVTVF) and 34–54 (WAWLLVLTFVPIFGFIIYLIF). PLD phosphodiesterase domains lie at 217-244 (LNYRNHRKLAIIDGDVGYIGGFNIGDEY) and 395-422 (DNGFIHAKTLVVDGEIASVGTANMDFRS). Active-site residues include His-222, Lys-224, Asp-229, His-400, Lys-402, and Asp-407.

This sequence belongs to the phospholipase D family. Cardiolipin synthase subfamily.

It localises to the cell membrane. It catalyses the reaction 2 a 1,2-diacyl-sn-glycero-3-phospho-(1'-sn-glycerol) = a cardiolipin + glycerol. Its function is as follows. Catalyzes the reversible phosphatidyl group transfer from one phosphatidylglycerol molecule to another to form cardiolipin (CL) (diphosphatidylglycerol) and glycerol. This is Cardiolipin synthase (cls) from Listeria innocua serovar 6a (strain ATCC BAA-680 / CLIP 11262).